We begin with the raw amino-acid sequence, 495 residues long: Membrane-bound lytic murein transglycosylase F (495 aa).

The signal sequence occupies residues 1-29 (MEIRKLSLSTIRSIITSLSVLVLVISASA). The interval 30–273 (TLVRSTPPNV…VTKHFFERHI (244 aa)) is non-LT domain. Residues 274 to 495 (DEVTTGEAMV…TAAQGENLSL (222 aa)) form an LT domain region. Glu-320 is a catalytic residue.

It in the N-terminal section; belongs to the bacterial solute-binding protein 3 family. This sequence in the C-terminal section; belongs to the transglycosylase Slt family.

The protein localises to the cell outer membrane. The catalysed reaction is Exolytic cleavage of the (1-&gt;4)-beta-glycosidic linkage between N-acetylmuramic acid (MurNAc) and N-acetylglucosamine (GlcNAc) residues in peptidoglycan, from either the reducing or the non-reducing ends of the peptidoglycan chains, with concomitant formation of a 1,6-anhydrobond in the MurNAc residue.. Murein-degrading enzyme that degrades murein glycan strands and insoluble, high-molecular weight murein sacculi, with the concomitant formation of a 1,6-anhydromuramoyl product. Lytic transglycosylases (LTs) play an integral role in the metabolism of the peptidoglycan (PG) sacculus. Their lytic action creates space within the PG sacculus to allow for its expansion as well as for the insertion of various structures such as secretion systems and flagella. This is Membrane-bound lytic murein transglycosylase F from Cellvibrio japonicus (strain Ueda107) (Pseudomonas fluorescens subsp. cellulosa).